Reading from the N-terminus, the 111-residue chain is Aspartate 1-decarboxylase (111 aa).

Catalysis depends on Ser-25, which acts as the Schiff-base intermediate with substrate; via pyruvic acid. Ser-25 bears the Pyruvic acid (Ser) mark. Residue Thr-57 coordinates substrate. Catalysis depends on Tyr-58, which acts as the Proton donor. Substrate is bound at residue 73-75; sequence GPA.

It belongs to the PanD family. As to quaternary structure, heterooctamer of four alpha and four beta subunits. Requires pyruvate as cofactor. Is synthesized initially as an inactive proenzyme, which is activated by self-cleavage at a specific serine bond to produce a beta-subunit with a hydroxyl group at its C-terminus and an alpha-subunit with a pyruvoyl group at its N-terminus.

The protein resides in the cytoplasm. It catalyses the reaction L-aspartate + H(+) = beta-alanine + CO2. The protein operates within cofactor biosynthesis; (R)-pantothenate biosynthesis; beta-alanine from L-aspartate: step 1/1. In terms of biological role, catalyzes the pyruvoyl-dependent decarboxylation of aspartate to produce beta-alanine. This Francisella tularensis subsp. tularensis (strain FSC 198) protein is Aspartate 1-decarboxylase.